The following is a 443-amino-acid chain: MSKLNMTPREIVTYLDEYIIEQKEAKKFIAIALRNRYRRLQLEKSLQEEITPKNILMIGSTGVGKTEIARRMAKIMKLPFVKVEASKYTEVGFVGRDVESMVRDLVNNSVLLVENEHKEKLKDKIEEAVVEKIAKKLLPPLPSGVSEEKKQEYANSLLRMQQRIVQGELDSREIEIEVRKKSIEIDSNVPPEILRVQENLIKVFHKEQDKVKKTLSVKEAKEALKAEISDTLLDSEAIKMEGLKRAESSGVIFIDEIDKIAISPKEGGRQDPSKEGVQRDLLPIVEGSVVNTKYGSIKTEHILFIAAGAFHLSKPSDLIPELQGRFPLRVELENLTEEIMYMILTQTKTSIIKQYQALLKVEGVEVAFEDDAIKELAKLSYNANQKSEDIGARRLHTTIEKVLEDISFEAEDYSGQKVTITKELVQSKLGDLVADENLVKYIL.

ATP-binding positions include isoleucine 20, 62-67 (GVGKTE), aspartate 255, glutamate 321, and arginine 393.

This sequence belongs to the ClpX chaperone family. HslU subfamily. In terms of assembly, a double ring-shaped homohexamer of HslV is capped on each side by a ring-shaped HslU homohexamer. The assembly of the HslU/HslV complex is dependent on binding of ATP.

The protein localises to the cytoplasm. Its function is as follows. ATPase subunit of a proteasome-like degradation complex; this subunit has chaperone activity. The binding of ATP and its subsequent hydrolysis by HslU are essential for unfolding of protein substrates subsequently hydrolyzed by HslV. HslU recognizes the N-terminal part of its protein substrates and unfolds these before they are guided to HslV for hydrolysis. The polypeptide is ATP-dependent protease ATPase subunit HslU (Helicobacter acinonychis (strain Sheeba)).